A 402-amino-acid polypeptide reads, in one-letter code: Triose phosphate/phosphate translocator, chloroplastic (402 aa).

Residues 1–72 (MESRVLSRAT…KGASLLRPCP (72 aa)) constitute a chloroplast transit peptide. Residues 73-96 (ATAGGNDSAGEEKVAPVGFFSRYP) are Chloroplast intermembrane-facing. A helical transmembrane segment spans residues 97–117 (ALTTGFFFFTWYFLNVIFNIL). Residues 118–129 (NKKIYNYFPYPY) lie on the Lumenal side of the membrane. The chain crosses the membrane as a helical span at residues 130–150 (FVSVIHLAVGVVYCLVSWTVG). At 151–207 (LPKRAPIDGNLLKLLIPVAVCHALGHVTSNVSFAAVAVSFTHTVKALEPFFNAAASQ) the chain is on the chloroplast intermembrane side. The chain crosses the membrane as a helical span at residues 208 to 228 (FILGQSIPITLWLSLAPVVIG). Residues 229 to 272 (VSMASLTELSFNWLGFISAMISNISFTYRSIYSKKAMTDMDSTN) lie on the Lumenal side of the membrane. A helical transmembrane segment spans residues 273-292 (IYAYISIIALIVCIPPALII). At 293 to 370 (EGPTLLKTGF…IIFGNKISTQ (78 aa)) the chain is on the chloroplast intermembrane side. A helical transmembrane segment spans residues 371 to 391 (TGIGTGIAIAGVALYSFIKAQ). Topologically, residues 392 to 402 (IEEEKRQAKAA) are lumenal.

Belongs to the TPT transporter family. TPT (TC 2.A.7.9) subfamily. Homodimer.

Its subcellular location is the plastid. The protein localises to the chloroplast membrane. Functionally, mediates the export of fixed carbons from the chloroplasts into the cytosol in the form of triose phosphates. This is Triose phosphate/phosphate translocator, chloroplastic from Pisum sativum (Garden pea).